A 334-amino-acid polypeptide reads, in one-letter code: Ornithine carbamoyltransferase, catabolic (334 aa).

Residues 57 to 60 (STRT), glutamine 84, arginine 108, and 135 to 138 (HPTQ) each bind carbamoyl phosphate. Residues asparagine 168, aspartate 232, and 236-237 (SM) each bind L-ornithine. Carbamoyl phosphate-binding positions include 274 to 275 (CL) and arginine 321.

It belongs to the aspartate/ornithine carbamoyltransferase superfamily. OTCase family.

The protein resides in the cytoplasm. The catalysed reaction is carbamoyl phosphate + L-ornithine = L-citrulline + phosphate + H(+). The protein operates within amino-acid degradation; L-arginine degradation via ADI pathway; carbamoyl phosphate from L-arginine: step 2/2. In terms of biological role, reversibly catalyzes the transfer of the carbamoyl group from carbamoyl phosphate (CP) to the N(epsilon) atom of ornithine (ORN) to produce L-citrulline. This is Ornithine carbamoyltransferase, catabolic (arcB) from Avibacterium paragallinarum (Haemophilus gallinarum).